Here is a 165-residue protein sequence, read N- to C-terminus: 3-isopropylmalate dehydratase small subunit (165 aa).

This sequence belongs to the LeuD family. LeuD type 2 subfamily. Heterodimer of LeuC and LeuD.

It carries out the reaction (2R,3S)-3-isopropylmalate = (2S)-2-isopropylmalate. Its pathway is amino-acid biosynthesis; L-leucine biosynthesis; L-leucine from 3-methyl-2-oxobutanoate: step 2/4. In terms of biological role, catalyzes the isomerization between 2-isopropylmalate and 3-isopropylmalate, via the formation of 2-isopropylmaleate. This Saccharolobus islandicus (strain M.16.27) (Sulfolobus islandicus) protein is 3-isopropylmalate dehydratase small subunit.